The following is a 235-amino-acid chain: UPF0758 protein CD630_11440 (235 aa).

In terms of domain architecture, MPN spans 113-235; it reads KIMNPWDIQR…YFSFKENMII (123 aa). His184, His186, and Asp197 together coordinate Zn(2+). A JAMM motif motif is present at residues 184 to 197; that stretch reads HNHPSGSVEPSRED.

It belongs to the UPF0758 family.

The chain is UPF0758 protein CD630_11440 from Clostridioides difficile (strain 630) (Peptoclostridium difficile).